A 279-amino-acid chain; its full sequence is Undecaprenyl-diphosphatase (279 aa).

8 helical membrane-spanning segments follow: residues 2–22, 44–64, 85–105, 113–133, 163–183, 188–208, 225–245, and 255–275; these read LFIE…TEWL, AFME…VIVI, WQLW…AVPL, FNHM…FLWI, VLSI…AIIL, TVAA…YSGL, LLVL…VIKL, and FTVF…YSVF.

This sequence belongs to the UppP family.

It localises to the cell membrane. The enzyme catalyses di-trans,octa-cis-undecaprenyl diphosphate + H2O = di-trans,octa-cis-undecaprenyl phosphate + phosphate + H(+). Functionally, catalyzes the dephosphorylation of undecaprenyl diphosphate (UPP). Confers resistance to bacitracin. This Streptococcus equi subsp. equi (strain 4047) protein is Undecaprenyl-diphosphatase.